We begin with the raw amino-acid sequence, 75 residues long: Exodeoxyribonuclease 7 small subunit (75 aa).

The protein belongs to the XseB family. Heterooligomer composed of large and small subunits.

It is found in the cytoplasm. The enzyme catalyses Exonucleolytic cleavage in either 5'- to 3'- or 3'- to 5'-direction to yield nucleoside 5'-phosphates.. Its function is as follows. Bidirectionally degrades single-stranded DNA into large acid-insoluble oligonucleotides, which are then degraded further into small acid-soluble oligonucleotides. The polypeptide is Exodeoxyribonuclease 7 small subunit (Listeria monocytogenes serotype 4b (strain CLIP80459)).